Here is a 981-residue protein sequence, read N- to C-terminus: Translation initiation factor IF-2 (981 aa).

The disordered stretch occupies residues 31 to 370; sequence FVKSASSTVE…SKRAKRAEYE (340 aa). Positions 64-87 are enriched in low complexity; that stretch reads GAAAPAARPAAKPGAPSPSAAKPG. Residues 88–111 are compositionally biased toward pro residues; it reads GPRPGPKPAAPAPAAPAAPAPAAP. Over residues 112–121 the composition is skewed to low complexity; that stretch reads AAPAAAAPAA. Positions 136-145 are enriched in pro residues; it reads PAQPARPAPA. The span at 146-165 shows a compositional bias: low complexity; sequence APAASAPAAPAAPAAPSTGA. Pro residues predominate over residues 256 to 269; it reads RPSPGSMPPRPNPG. Positions 270–279 are enriched in low complexity; that stretch reads AMPARSARPA. Gly residues predominate over residues 280 to 339; the sequence is PGGGGRPGRPGGAPGGRPGGGGGGYRGGGAPGAGAGAGAPGGAAPAGGFRGRPGGGGRPG. Residues 356-365 are compositionally biased toward basic residues; that stretch reads RRGRKSKRAK. The region spanning 477–649 is the tr-type G domain; sequence SRPPVVTVMG…VLLTADASLD (173 aa). The tract at residues 486 to 493 is G1; sequence GHVDHGKT. Position 486 to 493 (486 to 493) interacts with GTP; the sequence is GHVDHGKT. Residues 511–515 are G2; the sequence is GITQH. The G3 stretch occupies residues 536–539; it reads DTPG. GTP-binding positions include 536–540 and 590–593; these read DTPGH and NKID. The G4 stretch occupies residues 590 to 593; sequence NKID. Residues 626 to 628 are G5; it reads SAK.

The protein belongs to the TRAFAC class translation factor GTPase superfamily. Classic translation factor GTPase family. IF-2 subfamily.

Its subcellular location is the cytoplasm. Its function is as follows. One of the essential components for the initiation of protein synthesis. Protects formylmethionyl-tRNA from spontaneous hydrolysis and promotes its binding to the 30S ribosomal subunits. Also involved in the hydrolysis of GTP during the formation of the 70S ribosomal complex. The chain is Translation initiation factor IF-2 from Rhodococcus erythropolis (strain PR4 / NBRC 100887).